The following is a 365-amino-acid chain: MNFDPIDDFDDESQVSAELVAGDGDVEASLRPKSLDDFIGQPRVREQLQLVLTGAKLRGSTPDHILMSGPPGLGKTSMAMIIAGELGSSLRLTSGPALERAGDLAAMLSNLVEGDVLFIDEIHRIARPAEEMLYLAMEDFRVDVVVGKGPGATSIPLEVAPFTLVGATTRSGALTGPLRDRFGFTAHMDFYEPEELQQILMRSAGILGVNLEVDAGAEIARRSRGTPRIANRLLRRVRDFAEVRADGIVTMDVAQAALAVYDVDQLGLDRLDRSVLSALVRSFGGGPVGVSTLAVAVGEEPSTVEEVCEPFLVRAGMIARTPRGRVATAAAWTQLGMTPPPDAAAGGIEVRVNEPQATLFDPNGE.

A large ATPase domain (RuvB-L) region spans residues 1 to 191 (MNFDPIDDFD…FGFTAHMDFY (191 aa)). Residues leucine 30, arginine 31, glycine 72, lysine 75, threonine 76, serine 77, 138–140 (EDF), arginine 181, tyrosine 191, and arginine 228 contribute to the ATP site. A Mg(2+)-binding site is contributed by threonine 76. A small ATPAse domain (RuvB-S) region spans residues 192-262 (EPEELQQILM…VAQAALAVYD (71 aa)). The segment at 265-365 (QLGLDRLDRS…QATLFDPNGE (101 aa)) is head domain (RuvB-H). 2 residues coordinate DNA: arginine 320 and arginine 325.

The protein belongs to the RuvB family. In terms of assembly, homohexamer. Forms an RuvA(8)-RuvB(12)-Holliday junction (HJ) complex. HJ DNA is sandwiched between 2 RuvA tetramers; dsDNA enters through RuvA and exits via RuvB. An RuvB hexamer assembles on each DNA strand where it exits the tetramer. Each RuvB hexamer is contacted by two RuvA subunits (via domain III) on 2 adjacent RuvB subunits; this complex drives branch migration. In the full resolvosome a probable DNA-RuvA(4)-RuvB(12)-RuvC(2) complex forms which resolves the HJ.

Its subcellular location is the cytoplasm. The enzyme catalyses ATP + H2O = ADP + phosphate + H(+). In terms of biological role, the RuvA-RuvB-RuvC complex processes Holliday junction (HJ) DNA during genetic recombination and DNA repair, while the RuvA-RuvB complex plays an important role in the rescue of blocked DNA replication forks via replication fork reversal (RFR). RuvA specifically binds to HJ cruciform DNA, conferring on it an open structure. The RuvB hexamer acts as an ATP-dependent pump, pulling dsDNA into and through the RuvAB complex. RuvB forms 2 homohexamers on either side of HJ DNA bound by 1 or 2 RuvA tetramers; 4 subunits per hexamer contact DNA at a time. Coordinated motions by a converter formed by DNA-disengaged RuvB subunits stimulates ATP hydrolysis and nucleotide exchange. Immobilization of the converter enables RuvB to convert the ATP-contained energy into a lever motion, pulling 2 nucleotides of DNA out of the RuvA tetramer per ATP hydrolyzed, thus driving DNA branch migration. The RuvB motors rotate together with the DNA substrate, which together with the progressing nucleotide cycle form the mechanistic basis for DNA recombination by continuous HJ branch migration. Branch migration allows RuvC to scan DNA until it finds its consensus sequence, where it cleaves and resolves cruciform DNA. This chain is Holliday junction branch migration complex subunit RuvB, found in Rhodococcus erythropolis (strain PR4 / NBRC 100887).